An 85-amino-acid polypeptide reads, in one-letter code: Acyl carrier protein ScoB (85 aa).

The region spanning 1-77 is the Carrier domain; sequence MPAPLTLDGF…QWWQLLSARQ (77 aa). The residue at position 38 (Ser38) is an O-(pantetheine 4'-phosphoryl)serine.

The protein belongs to the acyl carrier protein (ACP) family. The cofactor is pantetheine 4'-phosphate.

The protein operates within lipid metabolism; fatty acid metabolism. Functionally, acyl-carrier protein (ACP) involved in the biosynthesis of a unique class of isonitrile lipopeptides (INLPs). Is the dedicated ACP for the loading of activated acyl groups catalyzed by ScoC. This is Acyl carrier protein ScoB from Streptomyces coeruleorubidus.